We begin with the raw amino-acid sequence, 383 residues long: Dephospho-CoA kinase (383 aa).

The 199-residue stretch at 3–201 (RIGLTGGMGA…RRLVPFERNL (199 aa)) folds into the DPCK domain. 11 to 16 (GAGKST) is an ATP binding site. The tract at residues 196–383 (PFERNLRAAT…EVAERLLGTV (188 aa)) is UPF0157.

It in the N-terminal section; belongs to the CoaE family. The protein in the C-terminal section; belongs to the UPF0157 (GrpB) family.

It localises to the cytoplasm. The enzyme catalyses 3'-dephospho-CoA + ATP = ADP + CoA + H(+). The protein operates within cofactor biosynthesis; coenzyme A biosynthesis; CoA from (R)-pantothenate: step 5/5. Its function is as follows. Catalyzes the phosphorylation of the 3'-hydroxyl group of dephosphocoenzyme A to form coenzyme A. This chain is Dephospho-CoA kinase, found in Nocardia farcinica (strain IFM 10152).